We begin with the raw amino-acid sequence, 257 residues long: Deoxyribose-phosphate aldolase (257 aa).

D102 (proton donor/acceptor) is an active-site residue. K166 acts as the Schiff-base intermediate with acetaldehyde in catalysis. K198 (proton donor/acceptor) is an active-site residue.

It belongs to the DeoC/FbaB aldolase family. DeoC type 2 subfamily.

Its subcellular location is the cytoplasm. It carries out the reaction 2-deoxy-D-ribose 5-phosphate = D-glyceraldehyde 3-phosphate + acetaldehyde. It functions in the pathway carbohydrate degradation; 2-deoxy-D-ribose 1-phosphate degradation; D-glyceraldehyde 3-phosphate and acetaldehyde from 2-deoxy-alpha-D-ribose 1-phosphate: step 2/2. Catalyzes a reversible aldol reaction between acetaldehyde and D-glyceraldehyde 3-phosphate to generate 2-deoxy-D-ribose 5-phosphate. The polypeptide is Deoxyribose-phosphate aldolase (Shewanella piezotolerans (strain WP3 / JCM 13877)).